Reading from the N-terminus, the 318-residue chain is MDVVVYAPASIGNVSVGFDVLGAAVSPVDGTLLGDRVMVKAGDEPFSLKTAGSFVSKLPTETKENIVYDCWVVFSRELDKKGISVKSLEMTLEKNMPIGSGLGSSACSIVAALDALNRFHGQPLNETELLALMGEMEGKISGGIHYDNVAPCYLGGVQLMLEELGIISQEVPCFDDWYWVMAYPGIKVSTAEAREILPSQYRRQDVIAHGRHLAGFIHACHSGQPELAAKMIKDVIAEPYREKLLPGFADARKYATSAGALATGISGSGPTLFSICKEQDVAERVARWLEQNYVQNEEGFVHVCRLDKQGSIVTGSEL.

Pro97–Cys107 is a binding site for ATP.

This sequence belongs to the GHMP kinase family. Homoserine kinase subfamily.

It is found in the cytoplasm. It catalyses the reaction L-homoserine + ATP = O-phospho-L-homoserine + ADP + H(+). Its pathway is amino-acid biosynthesis; L-threonine biosynthesis; L-threonine from L-aspartate: step 4/5. Catalyzes the ATP-dependent phosphorylation of L-homoserine to L-homoserine phosphate. The sequence is that of Homoserine kinase from Vibrio atlanticus (strain LGP32) (Vibrio splendidus (strain Mel32)).